The primary structure comprises 510 residues: Cytochrome P450 monooxygenase ptmK (510 aa).

A helical membrane pass occupies residues 2–22; the sequence is IIVTFFWVGIVLSAIWTFYKV. N-linked (GlcNAc...) asparagine glycosylation is found at asparagine 313, asparagine 408, and asparagine 443. Residue cysteine 456 coordinates heme.

This sequence belongs to the cytochrome P450 family. It depends on heme as a cofactor.

It localises to the membrane. The protein operates within secondary metabolite biosynthesis. In terms of biological role, cytochrome P450 monooxygenase; part of the gene cluster that mediates the biosynthesis of the indole diterpenes penitrems. The geranylgeranyl diphosphate (GGPP) synthase ptmG catalyzes the first step in penitrem biosynthesis via conversion of farnesyl pyrophosphate and isopentyl pyrophosphate into geranylgeranyl pyrophosphate (GGPP). Condensation of indole-3-glycerol phosphate with GGPP by the prenyl transferase ptmC then forms 3-geranylgeranylindole (3-GGI). Epoxidation by the FAD-dependent monooxygenase ptmM leads to a epoxidized-GGI that is substrate of the terpene cyclase ptmB for cyclization to yield paspaline. Paspaline is subsequently converted to 13-desoxypaxilline by the cytochrome P450 monooxygenase ptmP, the latter being then converted to paxilline by the cytochrome P450 monooxygenase ptmQ. Paxilline is converted to beta-paxitriol via C-10 ketoreduction by the short-chain dehydrogenase ptmH which can be monoprenylated at the C-20 by the indole diterpene prenyltransferase ptmD. A two-step elimination (acetylation and elimination) process performed by the O-acetyltransferase ptmV and ptmI leads to the production of the prenylated form of penijanthine. The FAD-linked oxidoreductase ptmO then converts the prenylated form of penijanthine into PC-M5 which is in turn transformed into PC-M4 by the aromatic dimethylallyltransferase ptmE. Five sequential oxidative transformations performed by the cytochrome P450 monooxygenases ptmK, ptmU, ptmL, ptmN and ptmJ yield the various penitrem compounds. PtmK, ptmU and ptmM are involved in the formation of the key bicyclic ring of penitrem C via the formation of the intermediates secopenitrem D and penitrem D. PtmL catalyzes the epoxidation of penitrem D and C to yield penitrem B and F, respectively. PtmJ catalyzes the last benzylic hydroxylation to convert penitrem B to prenitrem E and penitrem F to penitrem A. This is Cytochrome P450 monooxygenase ptmK from Penicillium ochrochloron.